The following is a 440-amino-acid chain: GTPase Obg (440 aa).

Positions 5–163 constitute an Obg domain; the sequence is STFVDQTKIE…RTLRLELKVL (159 aa). Positions 164-338 constitute an OBG-type G domain; that stretch reads ADVGLVGFPS…LMSRAADLVS (175 aa). Residues 170 to 177, 195 to 199, 217 to 220, 288 to 291, and 319 to 321 contribute to the GTP site; these read GFPSVGKS, FTTLK, DLPG, SQMD, and SSV. 2 residues coordinate Mg(2+): Ser177 and Thr197. The OCT domain maps to 362–440; sequence YHRPEKMEFT…IGDFSFEFVQ (79 aa).

The protein belongs to the TRAFAC class OBG-HflX-like GTPase superfamily. OBG GTPase family. In terms of assembly, monomer. Mg(2+) serves as cofactor.

The protein resides in the cytoplasm. Functionally, an essential GTPase which binds GTP, GDP and possibly (p)ppGpp with moderate affinity, with high nucleotide exchange rates and a fairly low GTP hydrolysis rate. Plays a role in control of the cell cycle, stress response, ribosome biogenesis and in those bacteria that undergo differentiation, in morphogenesis control. This Lactobacillus delbrueckii subsp. bulgaricus (strain ATCC 11842 / DSM 20081 / BCRC 10696 / JCM 1002 / NBRC 13953 / NCIMB 11778 / NCTC 12712 / WDCM 00102 / Lb 14) protein is GTPase Obg.